The chain runs to 798 residues: MAVRELCFSRQRQVLFLFLFWGVSLAGSGFGRYSVTEETEKGSFVVNLAKDLGLAEGKLAARGTRVVSDDNKQYLLLDSHTGNLLTNEKLDREKLCGPKEPCMLYFQILMDDPFQIYRAELRVRDINDHAPVFQDKETVLKISENTAEGTAFRLERAQDPDGGLNGIQNYTISPNSFFHIKISGSDEGMIYPELVLDKALDREEQEELSLTLTALDGGSPSRSGTSTVRIVVLDVNDNAPQFAQALYETQAPENSPIGFLIVKVSAEDVDSGVNAEVSYSFFDASENIRTTFQINPFSGEIFLRELLDYELVNSYKINIQAMDGGGLSARCRVLVEVLDTNDNPPELIVSSFSNSVAENSPETPLAVFKINDRDSGENGKMVCYIQENLPFLLKPSVENFYILITEGALDRELRAEYNITITVTDLGTPRLKTEHNITVLVSDVNDNAPAFTQTSYTLFVRENNSPALHIGSVSATDGDSGTNAQVTYSLLPPQDLHLPLASLVSINADNGHLFALRSLDYEALQAFEFRVGATDRGSPALSSEALVRVLVLDANDNSPFVLYPLQNGSAPCTELVPRAAEPGYLVTKVVAVDGDSGQNAWLSYQLLKATEPGLFGVWAHNGEVRTARLLSERDAAKHRLVVLVKDNGEPPRSATATLHLLLVDGFSQPYLPLPEAAPAQAQADLLTVYLVVALASVSSLFLFSVLLFVAVRLCRRSRAASVGRCSVPEGPFPGHLVDVSGAETLSQSYQYEVCLTGGPGTSEFKFLKPVISDIQAQGPGRKGEENSTFRNSFGFNIQ.

The first 26 residues, 1–26 (MAVRELCFSRQRQVLFLFLFWGVSLA), serve as a signal peptide directing secretion. The Extracellular segment spans residues 27–690 (GSGFGRYSVT…AQADLLTVYL (664 aa)). 5 consecutive Cadherin domains span residues 35–133 (VTEE…APVF), 138–242 (TVLK…APQF), 247–347 (YETQ…PPEL), 352–451 (FSNS…APAF), and 456–561 (YTLF…SPFV). Residue Asn169 is glycosylated (N-linked (GlcNAc...) asparagine). Asn418 and Asn436 each carry an N-linked (GlcNAc...) asparagine glycan. N-linked (GlcNAc...) asparagine glycosylation is present at Asn567. The Cadherin 6 domain maps to 568 to 671 (GSAPCTELVP…LVDGFSQPYL (104 aa)). A helical membrane pass occupies residues 691–711 (VVALASVSSLFLFSVLLFVAV). The Cytoplasmic portion of the chain corresponds to 712–798 (RLCRRSRAAS…FRNSFGFNIQ (87 aa)).

Its subcellular location is the cell membrane. Potential calcium-dependent cell-adhesion protein. May be involved in the establishment and maintenance of specific neuronal connections in the brain. This is Protocadherin beta-10 (PCDHB10) from Pan troglodytes (Chimpanzee).